The following is a 1211-amino-acid chain: Diacylglycerol kinase 1 (1211 aa).

The tract at residues 174 to 244 (HHSLGGHLSH…RNSSKKSSNS (71 aa)) is disordered. A compositionally biased stretch (polar residues) spans 197 to 230 (VTPSPLASGPSMFQASNPARRSVDSSPSHSATNH). Low complexity predominate over residues 231-244 (SQMSRNSSKKSSNS). EF-hand domains lie at 286 to 321 (RPED…MMAV) and 331 to 366 (ELRP…TIPL). Ca(2+) contacts are provided by Asp-299, Asp-301, Asn-303, Glu-310, Asp-344, Asp-346, Asp-348, Thr-350, and Glu-355. 2 Phorbol-ester/DAG-type zinc fingers span residues 382 to 432 (IHVW…PASC) and 449 to 498 (LHHW…KKEC). Residues 548–682 (ELSCPLLVFV…LDRWSIEVTN (135 aa)) enclose the DAGKc domain. Disordered regions lie at residues 789–841 (TLRT…ETEK), 874–893 (AATA…QRNK), and 910–958 (DHED…QQQQ). The segment covering 795 to 805 (SSSSSNTSSGS) has biased composition (low complexity). Positions 826 to 841 (DVREKSVPRRSGETEK) are enriched in basic and acidic residues. Over residues 879–893 (PVGSNQSDNSSQRNK) the composition is skewed to polar residues. Positions 931–958 (NSIPATPATPITPTTPNAASSVLQQQQQ) are enriched in low complexity.

This sequence belongs to the eukaryotic diacylglycerol kinase family. In 10-11 hours embryos, expression is abundant in a limited number of cells in the procephalic region and in the ventral nerve cord. Predominantly expressed in the adult nervous system and muscle: including compound eyes, brain cortex, fibrillar muscle, and tubular muscle.

The catalysed reaction is a 1,2-diacyl-sn-glycerol + ATP = a 1,2-diacyl-sn-glycero-3-phosphate + ADP + H(+). In terms of biological role, upon cell stimulation converts the second messenger diacylglycerol into phosphatidate, initiating the resynthesis of phosphatidylinositols and attenuating protein kinase C activity. May have a role in the development of the embryonic nervous system and the function of the adult nervous system and muscle; regulating signal transduction in neurons. This chain is Diacylglycerol kinase 1 (Dgk), found in Drosophila melanogaster (Fruit fly).